A 216-amino-acid polypeptide reads, in one-letter code: MOB kinase activator-like 2A (216 aa).

Zn(2+)-binding residues include Cys81, Cys86, His162, and His167.

It belongs to the MOB1/phocein family.

It is found in the nucleus. This is MOB kinase activator-like 2A from Arabidopsis thaliana (Mouse-ear cress).